A 544-amino-acid chain; its full sequence is Chaperonin GroEL (544 aa).

Residues 30–33, lysine 51, 87–91, glycine 415, and aspartate 495 each bind ATP; these read TLGP and DGTTT.

The protein belongs to the chaperonin (HSP60) family. Forms a cylinder of 14 subunits composed of two heptameric rings stacked back-to-back. Interacts with the co-chaperonin GroES.

The protein localises to the cytoplasm. It catalyses the reaction ATP + H2O + a folded polypeptide = ADP + phosphate + an unfolded polypeptide.. Functionally, together with its co-chaperonin GroES, plays an essential role in assisting protein folding. The GroEL-GroES system forms a nano-cage that allows encapsulation of the non-native substrate proteins and provides a physical environment optimized to promote and accelerate protein folding. This is Chaperonin GroEL from Bartonella bacilliformis.